The following is a 444-amino-acid chain: Ribulose bisphosphate carboxylase (444 aa).

Residue lysine 163 is the Proton acceptor of the active site. Lysine 165 is a substrate binding site. 3 residues coordinate Mg(2+): lysine 189, aspartate 191, and glutamate 192. Lysine 189 is modified (N6-carboxylysine). The Proton acceptor role is filled by histidine 281. Residues arginine 282, histidine 314, 367–369, and 389–392 each bind substrate; these read SGG and QLGG.

It belongs to the RuBisCO large chain family. Type III subfamily. In terms of assembly, homodecamer, consisting of five dimer units which form a ring-like pentagonal structure. This arrangement is essential for its high thermostability. In contrast to form I RuBisCO, the form III RuBisCO is composed solely of large subunits. Requires Mg(2+) as cofactor.

It carries out the reaction 2 (2R)-3-phosphoglycerate + 2 H(+) = D-ribulose 1,5-bisphosphate + CO2 + H2O. The catalysed reaction is D-ribulose 1,5-bisphosphate + O2 = 2-phosphoglycolate + (2R)-3-phosphoglycerate + 2 H(+). Catalyzes the addition of molecular CO(2) and H(2)O to ribulose 1,5-bisphosphate (RuBP), generating two molecules of 3-phosphoglycerate (3-PGA). Functions in an archaeal AMP degradation pathway, together with AMP phosphorylase and R15P isomerase. The protein is Ribulose bisphosphate carboxylase of Thermococcus kodakarensis (strain ATCC BAA-918 / JCM 12380 / KOD1) (Pyrococcus kodakaraensis (strain KOD1)).